We begin with the raw amino-acid sequence, 45 residues long: Photosystem II reaction center protein K (45 aa).

A propeptide spanning residues 1-8 (MTQIFLIG) is cleaved from the precursor. Residues 20–40 (IVDVLPIIPVLFLLLAFVWQA) traverse the membrane as a helical segment.

It belongs to the PsbK family. PSII is composed of 1 copy each of membrane proteins PsbA, PsbB, PsbC, PsbD, PsbE, PsbF, PsbH, PsbI, PsbJ, PsbK, PsbL, PsbM, PsbT, PsbX, PsbY, PsbZ, Psb30/Ycf12, at least 3 peripheral proteins of the oxygen-evolving complex and a large number of cofactors. It forms dimeric complexes.

It localises to the plastid. Its subcellular location is the chloroplast thylakoid membrane. Functionally, one of the components of the core complex of photosystem II (PSII). PSII is a light-driven water:plastoquinone oxidoreductase that uses light energy to abstract electrons from H(2)O, generating O(2) and a proton gradient subsequently used for ATP formation. It consists of a core antenna complex that captures photons, and an electron transfer chain that converts photonic excitation into a charge separation. This is Photosystem II reaction center protein K from Ostreococcus tauri.